The primary structure comprises 512 residues: GMP synthase [glutamine-hydrolyzing] (512 aa).

Residues 3–196 form the Glutamine amidotransferase type-1 domain; sequence NILILDFGSQ…VKHICQASET (194 aa). The active-site Nucleophile is Cys80. Active-site residues include His169 and Glu171. The region spanning 197 to 387 is the GMPS ATP-PPase domain; it reads WKIETIEKQL…LGLPDVLISR (191 aa). 225–231 serves as a coordination point for ATP; it reads SGGVDSS.

Homodimer.

It carries out the reaction XMP + L-glutamine + ATP + H2O = GMP + L-glutamate + AMP + diphosphate + 2 H(+). The protein operates within purine metabolism; GMP biosynthesis; GMP from XMP (L-Gln route): step 1/1. Catalyzes the synthesis of GMP from XMP. The sequence is that of GMP synthase [glutamine-hydrolyzing] from Chlamydia caviae (strain ATCC VR-813 / DSM 19441 / 03DC25 / GPIC) (Chlamydophila caviae).